Reading from the N-terminus, the 194-residue chain is MRLILLGPPGAGKGTQAGLLTKKHGIPQLSTGDMLRAAVAQQSEIGKRAKAVMDAGQLVSDEIVNQIVSERIDAPDCANGFILDGYPRTVPQAQALSQMLSGKGLKLDAVIELKVDENALVKRMESRVAETIAKGAQVRSDDNPEAFRKRLVEYREKTAPLSSYYAGTGELRIINGMAPVEEVTAEIERILVPA.

Residue glycine 10–threonine 15 coordinates ATP. The tract at residues serine 30 to valine 59 is NMP. Residues threonine 31, arginine 36, glutamine 57 to valine 59, glycine 85 to arginine 88, and glutamine 92 each bind AMP. Residues serine 126–aspartate 142 are LID. Arginine 127 provides a ligand contact to ATP. Positions 139 and 150 each coordinate AMP. Alanine 178 lines the ATP pocket.

Belongs to the adenylate kinase family. As to quaternary structure, monomer.

Its subcellular location is the cytoplasm. It catalyses the reaction AMP + ATP = 2 ADP. It functions in the pathway purine metabolism; AMP biosynthesis via salvage pathway; AMP from ADP: step 1/1. Functionally, catalyzes the reversible transfer of the terminal phosphate group between ATP and AMP. Plays an important role in cellular energy homeostasis and in adenine nucleotide metabolism. This chain is Adenylate kinase, found in Brucella melitensis biotype 1 (strain ATCC 23456 / CCUG 17765 / NCTC 10094 / 16M).